A 189-amino-acid polypeptide reads, in one-letter code: Putative ankyrin repeat protein TV1425 (189 aa).

ANK repeat units lie at residues 31–60 (YNRT…KLED), 64–93 (EGST…NVNT), 97–126 (SGKT…NVND), and 130–159 (EGET…DISA).

The chain is Putative ankyrin repeat protein TV1425 from Thermoplasma volcanium (strain ATCC 51530 / DSM 4299 / JCM 9571 / NBRC 15438 / GSS1).